The chain runs to 725 residues: 1,4-alpha-glucan branching enzyme GlgB (725 aa).

The active-site Nucleophile is the Asp-406. Catalysis depends on Glu-459, which acts as the Proton donor.

The protein belongs to the glycosyl hydrolase 13 family. GlgB subfamily. As to quaternary structure, monomer.

It carries out the reaction Transfers a segment of a (1-&gt;4)-alpha-D-glucan chain to a primary hydroxy group in a similar glucan chain.. Its pathway is glycan biosynthesis; glycogen biosynthesis. Its function is as follows. Catalyzes the formation of the alpha-1,6-glucosidic linkages in glycogen by scission of a 1,4-alpha-linked oligosaccharide from growing alpha-1,4-glucan chains and the subsequent attachment of the oligosaccharide to the alpha-1,6 position. This is 1,4-alpha-glucan branching enzyme GlgB from Methylobacillus flagellatus (strain ATCC 51484 / DSM 6875 / VKM B-1610 / KT).